A 156-amino-acid chain; its full sequence is Endoribonuclease YbeY (156 aa).

Zn(2+) contacts are provided by His122, His126, and His132.

The protein belongs to the endoribonuclease YbeY family. Zn(2+) serves as cofactor.

The protein localises to the cytoplasm. In terms of biological role, single strand-specific metallo-endoribonuclease involved in late-stage 70S ribosome quality control and in maturation of the 3' terminus of the 16S rRNA. The polypeptide is Endoribonuclease YbeY (Bacillus cereus (strain G9842)).